The following is a 546-amino-acid chain: Glucose-6-phosphate isomerase (546 aa).

Glutamate 357 (proton donor) is an active-site residue. Active-site residues include histidine 389 and lysine 509.

It belongs to the GPI family.

The protein resides in the cytoplasm. The enzyme catalyses alpha-D-glucose 6-phosphate = beta-D-fructose 6-phosphate. The protein operates within carbohydrate biosynthesis; gluconeogenesis. It participates in carbohydrate degradation; glycolysis; D-glyceraldehyde 3-phosphate and glycerone phosphate from D-glucose: step 2/4. Functionally, catalyzes the reversible isomerization of glucose-6-phosphate to fructose-6-phosphate. This is Glucose-6-phosphate isomerase from Anaeromyxobacter dehalogenans (strain 2CP-1 / ATCC BAA-258).